The sequence spans 304 residues: 3-diazoavenalumate denitrifying reductase (304 aa).

The protein belongs to the NAD(P)-dependent epimerase/dehydratase family.

It carries out the reaction 3-diazoavenalumate + NADPH + H(+) = avenalumate + N2 + NADP(+). The enzyme catalyses 3-diazoavenalumate + NADH + H(+) = avenalumate + N2 + NAD(+). It catalyses the reaction (E)-3-diazocoumarate + NADPH = N2 + (E)-4-coumarate + NADP(+). The catalysed reaction is (E)-3-diazocoumarate + NADH = N2 + (E)-4-coumarate + NAD(+). Functionally, oxidoreductase involved in the biosynthesis of avenalumic acid (AVA). Catalyzes the denitrification of 3-diazoavenalumic acid (3-DAA) to produce AVA. It can also act on 3-diazocoumaric acid (3-DCA). Can use NADPH or NADH as a reductant, with a preference for NADPH. This is 3-diazoavenalumate denitrifying reductase from Streptomyces sp.